The chain runs to 467 residues: FAD-dependent oxidoreductase dbaF (467 aa).

The N-terminal stretch at 1 to 20 (MKSVLASGALTLAFSLAALA) is a signal peptide. Residues N96, N134, N337, N391, and N451 are each glycosylated (N-linked (GlcNAc...) asparagine).

The protein belongs to the beta-cyclopiazonate dehydrogenase family. The cofactor is FAD.

It participates in secondary metabolite biosynthesis. Functionally, FAD-dependent oxidoreductase; part of the gene cluster that mediates the biosynthesis of the antibiotic 2,4-dihydroxy-3-methyl-6-(2-oxopropyl)benzaldehyde (DHMBA) and its derivatives. The direct non-reducing polyketide synthase dbaI product is 2,4-dihydroxy-3-methyl-6-(2-oxopropyl)benzaldehyde (DHMBA), produced by condensation of one acetyl-CoA starter unit with 4 malonyl-CoA units and one methylation step. The FAD-dependent monooxygenase dbaH is responsible for the synthesis of yellow pigments derived from the oxidation of DHMBA. The roles of dbaB, C, E and F have still to be determined. The protein is FAD-dependent oxidoreductase dbaF of Emericella nidulans (strain FGSC A4 / ATCC 38163 / CBS 112.46 / NRRL 194 / M139) (Aspergillus nidulans).